Here is a 312-residue protein sequence, read N- to C-terminus: Malate dehydrogenase (312 aa).

NAD(+) contacts are provided by residues 7–13 (GAAGGIG) and Asp34. Residues Arg81 and Arg87 each contribute to the substrate site. Residues Asn94 and 117–119 (ITN) contribute to the NAD(+) site. Residues Asn119 and Arg153 each coordinate substrate. Catalysis depends on His177, which acts as the Proton acceptor. Met227 serves as a coordination point for NAD(+).

This sequence belongs to the LDH/MDH superfamily. MDH type 1 family. As to quaternary structure, homodimer.

The catalysed reaction is (S)-malate + NAD(+) = oxaloacetate + NADH + H(+). Its function is as follows. Catalyzes the reversible oxidation of malate to oxaloacetate. This chain is Malate dehydrogenase, found in Enterobacter sp. (strain 638).